Here is a 215-residue protein sequence, read N- to C-terminus: ATP phosphoribosyltransferase (215 aa).

It belongs to the ATP phosphoribosyltransferase family. Short subfamily. As to quaternary structure, heteromultimer composed of HisG and HisZ subunits.

It localises to the cytoplasm. The enzyme catalyses 1-(5-phospho-beta-D-ribosyl)-ATP + diphosphate = 5-phospho-alpha-D-ribose 1-diphosphate + ATP. It functions in the pathway amino-acid biosynthesis; L-histidine biosynthesis; L-histidine from 5-phospho-alpha-D-ribose 1-diphosphate: step 1/9. Its function is as follows. Catalyzes the condensation of ATP and 5-phosphoribose 1-diphosphate to form N'-(5'-phosphoribosyl)-ATP (PR-ATP). Has a crucial role in the pathway because the rate of histidine biosynthesis seems to be controlled primarily by regulation of HisG enzymatic activity. The sequence is that of ATP phosphoribosyltransferase from Acidithiobacillus ferrooxidans (strain ATCC 23270 / DSM 14882 / CIP 104768 / NCIMB 8455) (Ferrobacillus ferrooxidans (strain ATCC 23270)).